A 165-amino-acid chain; its full sequence is Large ribosomal subunit protein uL10 (165 aa).

This sequence belongs to the universal ribosomal protein uL10 family. Part of the ribosomal stalk of the 50S ribosomal subunit. The N-terminus interacts with L11 and the large rRNA to form the base of the stalk. The C-terminus forms an elongated spine to which L12 dimers bind in a sequential fashion forming a multimeric L10(L12)X complex.

Functionally, forms part of the ribosomal stalk, playing a central role in the interaction of the ribosome with GTP-bound translation factors. The polypeptide is Large ribosomal subunit protein uL10 (Mycoplasma capricolum subsp. capricolum (strain California kid / ATCC 27343 / NCTC 10154)).